Consider the following 310-residue polypeptide: Pseudouridine-5'-phosphate glycosidase (310 aa).

Residue Glu-26 is the Proton donor of the active site. Positions 87 and 107 each coordinate substrate. Asp-139 serves as a coordination point for Mn(2+). A substrate-binding site is contributed by 141–143 (SAD). The active-site Nucleophile is Lys-160.

It belongs to the pseudouridine-5'-phosphate glycosidase family. Homotrimer. The cofactor is Mn(2+).

It catalyses the reaction D-ribose 5-phosphate + uracil = psi-UMP + H2O. Its function is as follows. Catalyzes the reversible cleavage of pseudouridine 5'-phosphate (PsiMP) to ribose 5-phosphate and uracil. Functions biologically in the cleavage direction, as part of a pseudouridine degradation pathway. The sequence is that of Pseudouridine-5'-phosphate glycosidase from Roseobacter denitrificans (strain ATCC 33942 / OCh 114) (Erythrobacter sp. (strain OCh 114)).